Consider the following 245-residue polypeptide: tRNA (cytidine/uridine-2'-O-)-methyltransferase TrmJ (245 aa).

S-adenosyl-L-methionine-binding positions include 79–81, glycine 114, isoleucine 134, and 141–143; these read TSA and SSL.

Belongs to the class IV-like SAM-binding methyltransferase superfamily. RNA methyltransferase TrmH family. As to quaternary structure, homodimer.

It localises to the cytoplasm. The catalysed reaction is cytidine(32) in tRNA + S-adenosyl-L-methionine = 2'-O-methylcytidine(32) in tRNA + S-adenosyl-L-homocysteine + H(+). It catalyses the reaction uridine(32) in tRNA + S-adenosyl-L-methionine = 2'-O-methyluridine(32) in tRNA + S-adenosyl-L-homocysteine + H(+). In terms of biological role, catalyzes the formation of 2'O-methylated cytidine (Cm32) or 2'O-methylated uridine (Um32) at position 32 in tRNA. The polypeptide is tRNA (cytidine/uridine-2'-O-)-methyltransferase TrmJ (trmJ) (Cronobacter sakazakii (strain ATCC BAA-894) (Enterobacter sakazakii)).